A 449-amino-acid polypeptide reads, in one-letter code: Glutamate--tRNA ligase 2 (449 aa).

Positions 17-27 (PSPTGFLHVGN) match the 'HIGH' region motif. Positions 248 to 252 (ALSKR) match the 'KMSKS' region motif. K251 is an ATP binding site.

It belongs to the class-I aminoacyl-tRNA synthetase family. Glutamate--tRNA ligase type 1 subfamily. In terms of assembly, monomer.

The protein localises to the cytoplasm. The enzyme catalyses tRNA(Glu) + L-glutamate + ATP = L-glutamyl-tRNA(Glu) + AMP + diphosphate. Its function is as follows. Catalyzes the attachment of glutamate to tRNA(Glu) in a two-step reaction: glutamate is first activated by ATP to form Glu-AMP and then transferred to the acceptor end of tRNA(Glu). The polypeptide is Glutamate--tRNA ligase 2 (Jannaschia sp. (strain CCS1)).